The primary structure comprises 650 residues: MKLLRRRFFNSVNTITRPNRRHYATKYVAKVTSSSPSGRSLSAEVSLPNPLPADVRGYPLPRRHLICRATNLITGASNLSDAFSDLSDYLSSLSLSLTPDEASEILKSLNSPLLAVEFFKLVPSLCPYSQNDPFLYNRIILILSRSNLPDRFDRVRSILDSMVKSNVHGNISTVNILIGFFGNTEDLQMCLRLVKKWDLKMNSFTYKCLLQAYLRSRDYSKAFDVYCEIRRGGHKLDIFAYNMLLDALAKDEKACQVFEDMKKRHCRRDEYTYTIMIRTMGRIGKCDEAVGLFNEMITEGLTLNVVGYNTLMQVLAKGKMVDKAIQVFSRMVETGCRPNEYTYSLLLNLLVAEGQLVRLDGVVEISKRYMTQGIYSYLVRTLSKLGHVSEAHRLFCDMWSFPVKGERDSYMSMLESLCGAGKTIEAIEMLSKIHEKGVVTDTMMYNTVFSALGKLKQISHIHDLFEKMKKDGPSPDIFTYNILIASFGRVGEVDEAINIFEELERSDCKPDIISYNSLINCLGKNGDVDEAHVRFKEMQEKGLNPDVVTYSTLMECFGKTERVEMAYSLFEEMLVKGCQPNIVTYNILLDCLEKNGRTAEAVDLYSKMKQQGLTPDSITYTVLERLQSVSHGKSRIRRKNPITGWVVSPL.

Residues 1–23 constitute a mitochondrion transit peptide; that stretch reads MKLLRRRFFNSVNTITRPNRRHY. PPR repeat units follow at residues 132-169, 170-200, 202-236, 237-267, 269-303, 304-338, 339-369, 371-405, 406-440, 441-475, 476-510, 511-545, 546-580, and 581-615; these read DPFL…NVHG, NIST…WDLK, NSFT…GHKL, DIFA…RHCR, DEYT…GLTL, NVVG…GCRP, NEYT…SKRY, TQGI…PVKG, ERDS…GVVT, DTMM…GPSP, DIFT…DCKP, DIIS…GLNP, DVVT…GCQP, and NIVT…GLTP.

It belongs to the PPR family. P subfamily.

It localises to the mitochondrion. In Arabidopsis thaliana (Mouse-ear cress), this protein is Pentatricopeptide repeat-containing protein At1g51965, mitochondrial.